The following is a 1120-amino-acid chain: Transcription-repair-coupling factor (1120 aa).

The region spanning 591–756 is the Helicase ATP-binding domain; that stretch reads DLTNGMLMDR…MTGLKELSII (166 aa). ATP is bound at residue 604–611; that stretch reads GDVGFGKT. The DEEQ box motif lies at 709–712; that stretch reads DEEQ. Positions 777-933 constitute a Helicase C-terminal domain; the sequence is IIRDALLREH…TIASHDADLR (157 aa).

In the N-terminal section; belongs to the UvrB family. It in the C-terminal section; belongs to the helicase family. RecG subfamily.

The protein resides in the cytoplasm. Couples transcription and DNA repair by recognizing RNA polymerase (RNAP) stalled at DNA lesions. Mediates ATP-dependent release of RNAP and its truncated transcript from the DNA, and recruitment of nucleotide excision repair machinery to the damaged site. This is Transcription-repair-coupling factor from Rickettsia prowazekii (strain Madrid E).